The following is a 274-amino-acid chain: Kit ligand (274 aa).

Positions 1–25 are cleaved as a signal peptide; that stretch reads MKKTQTWIITCIYLQLLLFNPLVHT. Gln26 carries the post-translational modification Pyrrolidone carboxylic acid. Residues 26–215 are Extracellular-facing; sequence QGICSNRVTD…SNSIEDSSLQ (190 aa). Cystine bridges form between Cys29/Cys114 and Cys68/Cys164. N-linked (GlcNAc...) asparagine glycosylation is found at Asn90, Asn145, and Asn196. Residues 216 to 238 traverse the membrane as a helical segment; that stretch reads WAAVALPAFFSLVIGFAFGAFYW. Residues 239-274 lie on the Cytoplasmic side of the membrane; sequence KKKQPNLTRTVENRQINEEDNEISMLQEKEREFQEV.

This sequence belongs to the SCF family. Homodimer, non-covalently linked. Post-translationally, a soluble form is produced by proteolytic processing of isoform 1 in the extracellular domain.

The protein resides in the cell membrane. Its subcellular location is the cytoplasm. It localises to the cytoskeleton. It is found in the cell projection. The protein localises to the lamellipodium. The protein resides in the filopodium. Its subcellular location is the secreted. Stimulates the proliferation of mast cells. Able to augment the proliferation of both myeloid and lymphoid hematopoietic progenitors in bone marrow culture. Also mediates cell-cell adhesion. Acts synergistically with other cytokines, probably interleukins. This is Kit ligand (KITLG) from Bos taurus (Bovine).